A 274-amino-acid polypeptide reads, in one-letter code: NADH-ubiquinone oxidoreductase chain 2 (274 aa).

8 helical membrane passes run 28–48 (MIIMSALLLKSGAAPFHFWFP), 54–74 (LTWMNALVLMTWQKIAPLMLI), 79–99 (IKYLLLISVILSVIIGAIGGL), 107–127 (LMAFSSINHLGWMLSSLMISE), 128–148 (SIWLIYFFFYSFLSFVLTFMF), 171–191 (FTLFMNFLSLGGLPPFLGFLP), 206–226 (FLLLLMMMSTLITLFFYLRIC), and 254–274 (LIMTFFSIFGLFMISLFYFMF).

It belongs to the complex I subunit 2 family.

It is found in the mitochondrion inner membrane. It catalyses the reaction a ubiquinone + NADH + 5 H(+)(in) = a ubiquinol + NAD(+) + 4 H(+)(out). In terms of biological role, core subunit of the mitochondrial membrane respiratory chain NADH dehydrogenase (Complex I) that is believed to belong to the minimal assembly required for catalysis. Complex I functions in the transfer of electrons from NADH to the respiratory chain. The immediate electron acceptor for the enzyme is believed to be ubiquinone. The chain is NADH-ubiquinone oxidoreductase chain 2 (mt:ND2) from Drosophila mauritiana (Fruit fly).